A 586-amino-acid polypeptide reads, in one-letter code: Pescadillo homolog (586 aa).

The interval 1-54 is required for 28S ribosomal RNA processing; that stretch reads MGGLEKKKYERGSATNYITRNKARKKLQLSLPDFRRLCILKGIYPHEPKHKKKV. Positions 1–257 are sufficient for nucleolar localization; that stretch reads MGGLEKKKYE…PKIESQAQAE (257 aa). Residue Lys-98 is modified to N6-acetyllysine. The segment at 305–414 is sufficient for interaction with MAP1B; the sequence is VTAQEEDRRK…LLLPVAEYFP (110 aa). Residues 321–414 form the BRCT domain; sequence KHKKLFEGLK…LLLPVAEYFP (94 aa). The segment at 447–508 is disordered; it reads GEDPGNLEEE…QQRLGGKKPQ (62 aa). Residues 451–491 are compositionally biased toward acidic residues; sequence GNLEEEEEDEDDEGDDSEGDGDVAVENEEEVVEAESEEEEE. A Glycyl lysine isopeptide (Lys-Gly) (interchain with G-Cter in SUMO1); alternate cross-link involves residue Lys-515. Lys-515 is covalently cross-linked (Glycyl lysine isopeptide (Lys-Gly) (interchain with G-Cter in SUMO2); alternate). The tract at residues 537–586 is required for 28S ribosomal RNA processing; that stretch reads MMKKREKYLYQKIMFGKRRKIREANKLAEKRKAHDDAVRSEKKAKRTRPV. Residues 562-577 are compositionally biased toward basic and acidic residues; sequence KLAEKRKAHDDAVRSE. Residues 562–586 form a disordered region; that stretch reads KLAEKRKAHDDAVRSEKKAKRTRPV.

This sequence belongs to the pescadillo family. Component of the PeBoW complex, composed of BOP1, PES1 and WDR12. The complex is held together by BOP1, which interacts with PES1 via its N-terminal domain and with WDR12 via a high-affinity interaction between the seven-bladed beta-propeller domains of the 2 proteins. The PeBoW complex associates with the 66S pre-ribosome. The PeBoW complex also associates with DDX27, PES1 interacts directly with DDX27. Interacts with IRS1 and UBTF. May interact with MAP1B. Post-translationally, sumoylated.

It localises to the nucleus. It is found in the nucleolus. Its subcellular location is the nucleoplasm. The protein localises to the chromosome. In terms of biological role, component of the PeBoW complex, which is required for maturation of 28S and 5.8S ribosomal RNAs and formation of the 60S ribosome. This is Pescadillo homolog (Pes1) from Rattus norvegicus (Rat).